The chain runs to 315 residues: Methionyl-tRNA formyltransferase (315 aa).

Residue 113 to 116 coordinates (6S)-5,6,7,8-tetrahydrofolate; it reads SLLP.

It belongs to the Fmt family.

The enzyme catalyses L-methionyl-tRNA(fMet) + (6R)-10-formyltetrahydrofolate = N-formyl-L-methionyl-tRNA(fMet) + (6S)-5,6,7,8-tetrahydrofolate + H(+). Attaches a formyl group to the free amino group of methionyl-tRNA(fMet). The formyl group appears to play a dual role in the initiator identity of N-formylmethionyl-tRNA by promoting its recognition by IF2 and preventing the misappropriation of this tRNA by the elongation apparatus. In Escherichia coli O17:K52:H18 (strain UMN026 / ExPEC), this protein is Methionyl-tRNA formyltransferase.